We begin with the raw amino-acid sequence, 928 residues long: MVLVLHHILIAVVQFLRRGQQVFLKPDEPPPQPCADSLQDALLSLGAVIDIAGLRQAAKDALSAVLPKVETVYTYLVDGESRLVCEDPPHELPQEGKIREAVISRKRLSCDGLGPSDLLGKPLARLVAPLAPDTQVLVIPLLDKETGTVAAVILVHCGQLSDSEEQSLQVVEKHALVALQRVQALQQRRPEAVQNTSADPSEDQKDEKGYTAHDRKILQLCGELYDLDATSLQLKVLRYLQQETQATHCCLLLVSEDNLQLSCKVIGEKVLGEEVSFPLTMGRLGQVVEDKQCIQLKDLTSDDVQQLQNMLGCELRAMLCVPVISRATDQVVALACAFNKLGGDFFTDEDERAIQHCFHYTGTVLTSTLAFQKEQKLKCECQALLQVAKNLFTHLDDVSVLLQEIITEARNLSNAEICSVFLLDQNELVAKVFDGGVVDDESYEIRIPADQGIAGHVATTGQILNIPDAYAHPLFYRGVDDSTGFRTRNILCFPIKNENQEVIGVAELVNKINGPWFSKFDEDLATAFSIYCGISIAHSLLYKKVNEAQYRSHLANEMMMYHMKVSDDEYTKLLHDGIQPVAAIDSNFANFTYTPRSLPEDDTSMAILSMLQDMNFINNYKIDCPTLARFCLMVKKGYRDPPYHNWMHAFSVSHFCYLLYKNLELSNYLEDIEIFALFISCMCHDLDHRGTNNSFQVASKSVLAALYSSEGSVMERHHFAQAIAILNTHGCNIFDHFSRKDYQRMLDLMRDIILATDLAHHLRIFKDLQKMAEVGYDRNNKQHHRLLLCLLMTSCDLSDQTKGWKTTRKIAELIYKEFFSQGDLEKAMGNRPMEMMDREKAYIPELQISFMEHIAMPIYKLLQDLFPKAAELYERVASNREHWTKVSHKFTIRGLPSNNSLDFLDEEYEVPDLDVTRAPVNGCCSLEG.

Phosphoserine is present on Ser109. Residues 188–210 (RRPEAVQNTSADPSEDQKDEKGY) are disordered. GAF domains follow at residues 228 to 365 (DATS…GTVL) and 397 to 536 (DVSV…GISI). Residues Ser419, Asp434, Ile453, Tyr476, and Thr487 each coordinate 3',5'-cyclic GMP. In terms of domain architecture, PDEase spans 566–890 (SDDEYTKLLH…EHWTKVSHKF (325 aa)). Catalysis depends on His644, which acts as the Proton donor. Residues His648, His684, Asp685, and Asp796 each coordinate Zn(2+). Asp685 contacts Mg(2+).

Belongs to the cyclic nucleotide phosphodiesterase family. PDE2 subfamily. As to quaternary structure, homodimer. Requires Zn(2+) as cofactor. Mg(2+) serves as cofactor. Expressed in brain and liver.

It localises to the cell membrane. It is found in the cytoplasm. Its subcellular location is the mitochondrion matrix. The protein localises to the mitochondrion inner membrane. The protein resides in the mitochondrion outer membrane. The enzyme catalyses a nucleoside 3',5'-cyclic phosphate + H2O = a nucleoside 5'-phosphate + H(+). The catalysed reaction is 3',5'-cyclic GMP + H2O = GMP + H(+). It catalyses the reaction 3',5'-cyclic AMP + H2O = AMP + H(+). Its activity is regulated as follows. The 3',5'-cyclic-AMP phosphodiesterase activity is stimulated by 3',5'-cyclic GMP. Specifically inhibited by Bay 60-7550. When repressed, protected from ionomycin- but not staurosporin-induced cell death. Functionally, cGMP-activated cyclic nucleotide phosphodiesterase with a dual-specificity for the second messengers cAMP and cGMP, which are key regulators of many important physiological processes. Has a higher efficiency with cGMP compared to cAMP. Plays a role in cell growth and migration. Regulates mitochondrial cAMP levels and respiration. Involved in the regulation of mitochondria morphology/dynamics and apoptotic cell death via local modulation of cAMP/PKA signaling in the mitochondrion, including the monitoring of local cAMP levels at the outer mitochondrial membrane and of PKA-dependent phosphorylation of Dnm1l. This chain is cGMP-dependent 3',5'-cyclic phosphodiesterase, found in Rattus norvegicus (Rat).